Here is a 466-residue protein sequence, read N- to C-terminus: Glutamate--tRNA ligase 2 (466 aa).

The 'HIGH' region signature appears at 11–21; it reads PSPTGFLHIGG. A 'KMSKS' region motif is present at residues 239-243; the sequence is KLSKR. Residue lysine 242 participates in ATP binding.

The protein belongs to the class-I aminoacyl-tRNA synthetase family. Glutamate--tRNA ligase type 1 subfamily. In terms of assembly, monomer.

The protein resides in the cytoplasm. It catalyses the reaction tRNA(Glu) + L-glutamate + ATP = L-glutamyl-tRNA(Glu) + AMP + diphosphate. In terms of biological role, catalyzes the attachment of glutamate to tRNA(Glu) in a two-step reaction: glutamate is first activated by ATP to form Glu-AMP and then transferred to the acceptor end of tRNA(Glu). This chain is Glutamate--tRNA ligase 2, found in Roseobacter denitrificans (strain ATCC 33942 / OCh 114) (Erythrobacter sp. (strain OCh 114)).